Consider the following 556-residue polypeptide: 2-succinyl-5-enolpyruvyl-6-hydroxy-3-cyclohexene-1-carboxylate synthase (556 aa).

Belongs to the TPP enzyme family. MenD subfamily. In terms of assembly, homodimer. Mg(2+) is required as a cofactor. It depends on Mn(2+) as a cofactor. The cofactor is thiamine diphosphate.

It carries out the reaction isochorismate + 2-oxoglutarate + H(+) = 5-enolpyruvoyl-6-hydroxy-2-succinyl-cyclohex-3-ene-1-carboxylate + CO2. It functions in the pathway quinol/quinone metabolism; 1,4-dihydroxy-2-naphthoate biosynthesis; 1,4-dihydroxy-2-naphthoate from chorismate: step 2/7. It participates in quinol/quinone metabolism; menaquinone biosynthesis. Its function is as follows. Catalyzes the thiamine diphosphate-dependent decarboxylation of 2-oxoglutarate and the subsequent addition of the resulting succinic semialdehyde-thiamine pyrophosphate anion to isochorismate to yield 2-succinyl-5-enolpyruvyl-6-hydroxy-3-cyclohexene-1-carboxylate (SEPHCHC). The protein is 2-succinyl-5-enolpyruvyl-6-hydroxy-3-cyclohexene-1-carboxylate synthase of Staphylococcus haemolyticus (strain JCSC1435).